We begin with the raw amino-acid sequence, 512 residues long: MQLLTLPTLIFIFLNYGTPCLSLRILVYSPRMIPSHVAFVANIANLLGQRGHNVVVVDNVLRSDISNKLDLKVIEKVVKVETSANVAKLLADQSIPINFWSMRNEPEEQKKVMKQLGIIFLEQCKYLVSKEETVFNELKHLEFDFGIHEVFDICGIGIFEKLGIRKSVILSSTGMRDIVNEALGISSQLQDASILSDYGNSIPFYGIRRNLKFHSAWRNFFEVQSKTLEPLFETTSSFENLLRFSNLMFLNTHELADAHRPWSRRVHEIGGISFKFPMPLKNEYINLFNKYNSIILVSFGTTTPSFLMPEKYKNTLINTFQRFPDFLFIWKYEKDDEFTQKNKKGNVVFKKFLPQVDLLESRKIKLFITHGGQNSLLETFHSNTRTLITPLFGDQHRNAQIALENGLSHVLLKDQLANEELVYAAIKQGTESNKKLDDNLLKLSSNLKNAKQTSENLFLDTVESTYTDNLSPLNFEFYPKLYSSDQILLYLDSIAMFTLTLLTMILIRKFLL.

The N-terminal stretch at 1-22 is a signal peptide; the sequence is MQLLTLPTLIFIFLNYGTPCLS. A helical transmembrane segment spans residues 487 to 507; that stretch reads ILLYLDSIAMFTLTLLTMILI.

This sequence belongs to the UDP-glycosyltransferase family.

It localises to the membrane. It catalyses the reaction glucuronate acceptor + UDP-alpha-D-glucuronate = acceptor beta-D-glucuronoside + UDP + H(+). The polypeptide is Putative UDP-glucuronosyltransferase ugt-55 (ugt-55) (Caenorhabditis elegans).